The sequence spans 153 residues: MATKIRLKRQGKKFYAFYRVVVVDSRKKRDGKVIEEIGIYNPNTQPSTIQIKSDRAQYWLGVGAQPSEPVFKLLNITGDWQKYKGLEGAEGTLKTVEAGPDAEARIAAVENQAQKLKAAKSEAAAKAKAEAEAAAAAEEAPAEEAAEEAPAEA.

The disordered stretch occupies residues glutamate 130–alanine 153. Positions alanine 140 to alanine 153 are enriched in acidic residues.

It belongs to the bacterial ribosomal protein bS16 family.

This chain is Small ribosomal subunit protein bS16, found in Bifidobacterium longum subsp. infantis (strain ATCC 15697 / DSM 20088 / JCM 1222 / NCTC 11817 / S12).